The following is a 37-amino-acid chain: M-oxotoxin-Ot2c (37 aa).

Expressed by the venom gland.

The protein localises to the secreted. Disrupts biological membranes, particularly those rich in phosphocholine. Has antimicrobial activity against Gram-negative bacterium E.coli, Gram-positive bacteria B.subtilis and S.aureus, and hemolytic activity against sheep, pig and guinea pig red blood cells. Has insecticidal activity against S.frugiperda ovarian cells by opening non-selective ion channels. Enhances the insecticidal activity of spider venom neurotoxic peptides. The protein is M-oxotoxin-Ot2c of Oxyopes takobius (Lynx spider).